The chain runs to 132 residues: Large ribosomal subunit protein bL17 (132 aa).

It belongs to the bacterial ribosomal protein bL17 family. Part of the 50S ribosomal subunit. Contacts protein L32.

In Leptothrix cholodnii (strain ATCC 51168 / LMG 8142 / SP-6) (Leptothrix discophora (strain SP-6)), this protein is Large ribosomal subunit protein bL17.